A 216-amino-acid polypeptide reads, in one-letter code: Probable nicotinate-nucleotide adenylyltransferase (216 aa).

Belongs to the NadD family.

It catalyses the reaction nicotinate beta-D-ribonucleotide + ATP + H(+) = deamido-NAD(+) + diphosphate. It participates in cofactor biosynthesis; NAD(+) biosynthesis; deamido-NAD(+) from nicotinate D-ribonucleotide: step 1/1. Its function is as follows. Catalyzes the reversible adenylation of nicotinate mononucleotide (NaMN) to nicotinic acid adenine dinucleotide (NaAD). The chain is Probable nicotinate-nucleotide adenylyltransferase from Desulfatibacillum aliphaticivorans.